A 117-amino-acid polypeptide reads, in one-letter code: Large ribosomal subunit protein bL19 (117 aa).

This sequence belongs to the bacterial ribosomal protein bL19 family.

This protein is located at the 30S-50S ribosomal subunit interface and may play a role in the structure and function of the aminoacyl-tRNA binding site. The protein is Large ribosomal subunit protein bL19 of Shewanella sediminis (strain HAW-EB3).